The following is a 310-amino-acid chain: Porphobilinogen deaminase (310 aa).

S-(dipyrrolylmethanemethyl)cysteine is present on Cys-240.

The protein belongs to the HMBS family. As to quaternary structure, monomer. The cofactor is dipyrromethane.

It carries out the reaction 4 porphobilinogen + H2O = hydroxymethylbilane + 4 NH4(+). It functions in the pathway porphyrin-containing compound metabolism; protoporphyrin-IX biosynthesis; coproporphyrinogen-III from 5-aminolevulinate: step 2/4. Functionally, tetrapolymerization of the monopyrrole PBG into the hydroxymethylbilane pre-uroporphyrinogen in several discrete steps. This Desulfosudis oleivorans (strain DSM 6200 / JCM 39069 / Hxd3) (Desulfococcus oleovorans) protein is Porphobilinogen deaminase.